The chain runs to 57 residues: LECYQKSKVVTCQPEQKFCYSDTMTFFPNHPVYLSGCTFCRTDESGERCCTTDRCNK.

Cystine bridges form between Cys3/Cys19, Cys12/Cys37, Cys40/Cys49, and Cys50/Cys55.

It belongs to the three-finger toxin family. Short-chain subfamily. Orphan group XX sub-subfamily. Expressed by the venom gland.

The protein resides in the secreted. The sequence is that of Weak toxin CM-1b from Hemachatus haemachatus (Rinkhals).